The sequence spans 593 residues: Uncoordinated protein 58 (593 aa).

6 consecutive transmembrane segments (helical) span residues 186–206 (VILVSVLIGYLCLGAWILMLL), 291–311 (TFPTALLYVLTVLTTCGYGEV), 320–340 (VFSVAFALVGIPLMFITAADI), 402–422 (PIGAYVSCICLYCSMGSAMFI), 430–450 (FIHAFHFGFNLIVTVGLGDIV), and 455–475 (IFLSLIVAFVIVGLSVVTMCV).

The protein belongs to the two pore domain potassium channel (TC 1.A.1.8) family.

It localises to the membrane. Its function is as follows. Has a role in mobility, possibly in the transport of potassium in muscles. This is Uncoordinated protein 58 from Caenorhabditis briggsae.